A 138-amino-acid polypeptide reads, in one-letter code: DNA-directed RNA polymerase subunit omega (138 aa).

A disordered region spans residues 101–138; it reads AEDDDTLEADGLTIHDGADSDLDLSDDAGQDTDEADED. Residues 119–138 show a composition bias toward acidic residues; the sequence is DSDLDLSDDAGQDTDEADED.

This sequence belongs to the RNA polymerase subunit omega family. In terms of assembly, the RNAP catalytic core consists of 2 alpha, 1 beta, 1 beta' and 1 omega subunit. When a sigma factor is associated with the core the holoenzyme is formed, which can initiate transcription.

It carries out the reaction RNA(n) + a ribonucleoside 5'-triphosphate = RNA(n+1) + diphosphate. In terms of biological role, promotes RNA polymerase assembly. Latches the N- and C-terminal regions of the beta' subunit thereby facilitating its interaction with the beta and alpha subunits. In Rhodospirillum rubrum (strain ATCC 11170 / ATH 1.1.1 / DSM 467 / LMG 4362 / NCIMB 8255 / S1), this protein is DNA-directed RNA polymerase subunit omega.